A 756-amino-acid polypeptide reads, in one-letter code: NUT family member 2F (756 aa).

4 disordered regions span residues 173-200 (GNAR…PDDS), 293-438 (IQKS…TSDP), 511-639 (RAAP…LPGM), and 653-756 (RLSQ…HCSQ). A compositionally biased stretch (pro residues) spans 304-321 (SLPPPAPPRLEPRGPPAP). Residues 417 to 427 (EGQREKGKVEQ) show a composition bias toward basic and acidic residues. The span at 543-560 (QRVSVETSPPQTAAQDPQ) shows a compositional bias: polar residues. Residues 654–665 (LSQSPVPSSGLL) show a composition bias toward low complexity. Basic residues predominate over residues 746-756 (SRRKKKRHCSQ).

The protein belongs to the NUT family.

The protein is NUT family member 2F (NUTM2F) of Homo sapiens (Human).